The chain runs to 674 residues: DNA ligase (674 aa).

Residues 34 to 38 (DADFD), 82 to 83 (SL), and Glu107 each bind NAD(+). The active-site N6-AMP-lysine intermediate is the Lys109. Residues Arg130, Glu170, Lys286, and Lys310 each contribute to the NAD(+) site. Positions 404, 407, 423, and 429 each coordinate Zn(2+). In terms of domain architecture, BRCT spans 593–674 (KPAQTLEGIT…FTRLLETGEA (82 aa)).

It belongs to the NAD-dependent DNA ligase family. LigA subfamily. It depends on Mg(2+) as a cofactor. Mn(2+) serves as cofactor.

The catalysed reaction is NAD(+) + (deoxyribonucleotide)n-3'-hydroxyl + 5'-phospho-(deoxyribonucleotide)m = (deoxyribonucleotide)n+m + AMP + beta-nicotinamide D-nucleotide.. In terms of biological role, DNA ligase that catalyzes the formation of phosphodiester linkages between 5'-phosphoryl and 3'-hydroxyl groups in double-stranded DNA using NAD as a coenzyme and as the energy source for the reaction. It is essential for DNA replication and repair of damaged DNA. The chain is DNA ligase from Corynebacterium aurimucosum (strain ATCC 700975 / DSM 44827 / CIP 107346 / CN-1) (Corynebacterium nigricans).